We begin with the raw amino-acid sequence, 398 residues long: 1-deoxy-D-xylulose 5-phosphate reductoisomerase (398 aa).

Threonine 10, glycine 11, serine 12, isoleucine 13, lysine 37, asparagine 38, and asparagine 124 together coordinate NADPH. Residue lysine 125 participates in 1-deoxy-D-xylulose 5-phosphate binding. Glutamate 126 is a binding site for NADPH. Residue aspartate 150 participates in Mn(2+) binding. 1-deoxy-D-xylulose 5-phosphate is bound by residues serine 151, glutamate 152, serine 186, and histidine 209. Glutamate 152 contributes to the Mn(2+) binding site. Position 215 (glycine 215) interacts with NADPH. Serine 222, asparagine 227, lysine 228, and glutamate 231 together coordinate 1-deoxy-D-xylulose 5-phosphate. Glutamate 231 contributes to the Mn(2+) binding site.

This sequence belongs to the DXR family. Homodimer. Mg(2+) is required as a cofactor. Mn(2+) serves as cofactor.

The enzyme catalyses 2-C-methyl-D-erythritol 4-phosphate + NADP(+) = 1-deoxy-D-xylulose 5-phosphate + NADPH + H(+). The protein operates within isoprenoid biosynthesis; isopentenyl diphosphate biosynthesis via DXP pathway; isopentenyl diphosphate from 1-deoxy-D-xylulose 5-phosphate: step 1/6. Catalyzes the NADPH-dependent rearrangement and reduction of 1-deoxy-D-xylulose-5-phosphate (DXP) to 2-C-methyl-D-erythritol 4-phosphate (MEP). This chain is 1-deoxy-D-xylulose 5-phosphate reductoisomerase, found in Buchnera aphidicola subsp. Acyrthosiphon pisum (strain APS) (Acyrthosiphon pisum symbiotic bacterium).